The following is a 506-amino-acid chain: MNALTLTPGALTLKQLRGVWRHPTPLVLDENAHEAINQSVACVEAIVAEDRTAYGINTGFGLLAQTRIATHDLENLQRSLVLSHAAGVGAPLDDNMVRLMMVLKINSLARGFSGIRLSVIQALIALVNAQVYPWIPSKGSVGASGDLAPLAHMSLLLLGEGKARWQGEWLPAKDALKKAGLEPITLAAKEGLALLNGTQASTAFALRGLFEAEDLFASAVVCGALTTEAVLGSRSPFDARIHAVRGQRGQIDAAAMYRHVLTDTSEIADSHHNCDKVQDPYSLRCQPQVMGACLTQLRHAAEVLLVESNAVSDNPLVFAEQNEVVSGGNFHAEPVAMAADNLALAIAEIGALSERRIALMMDKHMSQLPPFLVRNGGVNSGFMIAQVTAAALASENKALSHPHSVDSLPTSANQEDHVSMAPAAGRRLWEMASNTRGVLAVEWLAAVQGIDLREGLKSSPLLEQARQTLREAVSHYDDDRFFAPDIEKAMELLDDGRLVALLPPVL.

The 5-imidazolinone (Ala-Gly) cross-link spans 143 to 145; that stretch reads ASG. Position 144 is a 2,3-didehydroalanine (Ser) (Ser144).

This sequence belongs to the PAL/histidase family. Post-translationally, contains an active site 4-methylidene-imidazol-5-one (MIO), which is formed autocatalytically by cyclization and dehydration of residues Ala-Ser-Gly.

It is found in the cytoplasm. It catalyses the reaction L-histidine = trans-urocanate + NH4(+). Its pathway is amino-acid degradation; L-histidine degradation into L-glutamate; N-formimidoyl-L-glutamate from L-histidine: step 1/3. In Enterobacter sp. (strain 638), this protein is Histidine ammonia-lyase.